Reading from the N-terminus, the 122-residue chain is High-potential iron-sulfur protein (122 aa).

Residues methionine 1–alanine 37 form the signal peptide. Cysteine 80, cysteine 83, cysteine 100, and cysteine 114 together coordinate [4Fe-4S] cluster.

This sequence belongs to the high-potential iron-sulfur protein (HiPIP) family. Homodimer.

It is found in the periplasm. In terms of biological role, specific class of high-redox-potential 4Fe-4S ferredoxins. Functions in anaerobic electron transport in most purple and in some other photosynthetic bacteria and in at least one genus (Paracoccus) of halophilic, denitrifying bacteria. The sequence is that of High-potential iron-sulfur protein (hip) from Allochromatium vinosum (strain ATCC 17899 / DSM 180 / NBRC 103801 / NCIMB 10441 / D) (Chromatium vinosum).